The following is a 389-amino-acid chain: Succinate--CoA ligase [ADP-forming] subunit beta (389 aa).

In terms of domain architecture, ATP-grasp spans 9-244; sequence KQLFADYGLP…ETQEDPREVE (236 aa). Residues Lys-46, 53–55, Glu-99, Gly-102, and Glu-107 each bind ATP; that span reads GRG. 2 residues coordinate Mg(2+): Asn-199 and Asp-213. Substrate-binding positions include Asn-264 and 321–323; that span reads GIV.

This sequence belongs to the succinate/malate CoA ligase beta subunit family. In terms of assembly, heterotetramer of two alpha and two beta subunits. It depends on Mg(2+) as a cofactor.

It catalyses the reaction succinate + ATP + CoA = succinyl-CoA + ADP + phosphate. It carries out the reaction GTP + succinate + CoA = succinyl-CoA + GDP + phosphate. The protein operates within carbohydrate metabolism; tricarboxylic acid cycle; succinate from succinyl-CoA (ligase route): step 1/1. Succinyl-CoA synthetase functions in the citric acid cycle (TCA), coupling the hydrolysis of succinyl-CoA to the synthesis of either ATP or GTP and thus represents the only step of substrate-level phosphorylation in the TCA. The beta subunit provides nucleotide specificity of the enzyme and binds the substrate succinate, while the binding sites for coenzyme A and phosphate are found in the alpha subunit. The chain is Succinate--CoA ligase [ADP-forming] subunit beta from Tolumonas auensis (strain DSM 9187 / NBRC 110442 / TA 4).